Reading from the N-terminus, the 220-residue chain is Adenylate kinase (220 aa).

An ATP-binding site is contributed by 10–15 (GSGKST). Residues 30-59 (ASGDIIRAEIKARTPLGIEMERYLSRGDLI) form an NMP region. AMP is bound by residues R36, 57 to 59 (DLI), 83 to 86 (GYPR), and Q90. Positions 124–161 (GRRICSKCGAVYHVEFNPPKVPGKCDICGGELIQRPDD) are LID. ATP is bound at residue R125. Residues C128 and C131 each contribute to the Zn(2+) site. An ATP-binding site is contributed by 134–135 (VY). C148 and C151 together coordinate Zn(2+). Residues R158 and R169 each contribute to the AMP site. G197 contacts ATP.

Belongs to the adenylate kinase family. In terms of assembly, monomer.

The protein localises to the cytoplasm. The catalysed reaction is AMP + ATP = 2 ADP. It participates in purine metabolism; AMP biosynthesis via salvage pathway; AMP from ADP: step 1/1. Its function is as follows. Catalyzes the reversible transfer of the terminal phosphate group between ATP and AMP. Plays an important role in cellular energy homeostasis and in adenine nucleotide metabolism. This is Adenylate kinase from Pyrococcus abyssi (strain GE5 / Orsay).